Reading from the N-terminus, the 208-residue chain is OVARIAN TUMOR DOMAIN-containing deubiquitinating enzyme 2 (208 aa).

In terms of domain architecture, OTU spans 5–127 (IVRRVIPSDN…GLHYDALALS (123 aa)). The active site involves Asp-13. Residue Cys-16 is the Nucleophile of the active site. Catalysis depends on residues His-120 and His-201.

The protein belongs to the peptidase C85 family.

It catalyses the reaction Thiol-dependent hydrolysis of ester, thioester, amide, peptide and isopeptide bonds formed by the C-terminal Gly of ubiquitin (a 76-residue protein attached to proteins as an intracellular targeting signal).. Functionally, hydrolase that can remove conjugated ubiquitin from proteins in vitro and may therefore play an important regulatory role at the level of protein turnover by preventing degradation. Cysteine protease with a preference for 'Lys-63' and 'Lys-48' -linked ubiquitin (UB) tetramers as substrates. This Arabidopsis thaliana (Mouse-ear cress) protein is OVARIAN TUMOR DOMAIN-containing deubiquitinating enzyme 2.